Here is a 1573-residue protein sequence, read N- to C-terminus: Mediator of RNA polymerase II transcription subunit 1 (1573 aa).

The short motif at 588 to 592 (LTSLL) is the LXXLL motif 1 element. Disordered regions lie at residues 595–691 (TSNS…EDDF), 774–883 (SKLP…FKDF), and 928–1564 (LGGP…GDDD). A compositionally biased stretch (pro residues) spans 606–617 (PTPPQHTPPPAS). Positions 629–633 (LMNLL) match the LXXLL motif 2 motif. Positions 651 to 668 (ERQNSSGSPRTELGSSAS) are enriched in polar residues. Residues 678–691 (TGTEKMKNQTEDDF) are compositionally biased toward basic and acidic residues. Composition is skewed to polar residues over residues 791–804 (RDSS…STLF), 835–864 (GSPN…QSGF), and 934–944 (QETQSRSQSPL). Residues 949–961 (LGKDRPQKQKVKE) are compositionally biased toward basic and acidic residues. Residues 963–973 (GNGGGAGGGLS) are compositionally biased toward gly residues. 5 stretches are compositionally biased toward low complexity: residues 1025 to 1038 (PTST…GTSG), 1053 to 1085 (KITI…SSSS), 1092 to 1116 (SSLS…MKIG), 1124 to 1143 (SGQS…SMGK), and 1155 to 1164 (SSNVNNSSGS). Polar residues predominate over residues 1176 to 1193 (MNPSLSKPNISPSHSRPS). The span at 1226–1277 (LSGSGSNSTTKSSSGLVSSGSLTQKPNSSSSSSSSSSSSSSSSSSSSSSFSS) shows a compositional bias: low complexity. The span at 1278 to 1290 (GVSQNLHSSSKGK) shows a compositional bias: polar residues. A compositionally biased stretch (basic and acidic residues) spans 1350 to 1362 (PTKREKGEKDKSK). 2 stretches are compositionally biased toward polar residues: residues 1420-1435 (SQMQ…SGST) and 1443-1457 (PSHN…QALD). Residues 1461 to 1471 (ESGSSSIAEKS) are compositionally biased toward low complexity. The segment covering 1496–1505 (KHKKHKKEKK) has biased composition (basic residues). Positions 1506–1518 (RLKDKDRDREKKK) are enriched in basic and acidic residues.

This sequence belongs to the Mediator complex subunit 1 family. As to quaternary structure, component of the Mediator complex.

The protein localises to the nucleus. Component of the Mediator complex, a coactivator involved in the regulated transcription of nearly all RNA polymerase II-dependent genes. Mediator functions as a bridge to convey information from gene-specific regulatory proteins to the basal RNA polymerase II transcription machinery. Mediator is recruited to promoters by direct interactions with regulatory proteins and serves as a scaffold for the assembly of a functional preinitiation complex with RNA polymerase II and the general transcription factors. The polypeptide is Mediator of RNA polymerase II transcription subunit 1 (med1) (Xenopus tropicalis (Western clawed frog)).